A 383-amino-acid polypeptide reads, in one-letter code: Succinyl-diaminopimelate desuccinylase (383 aa).

H79 is a Zn(2+) binding site. Residue D81 is part of the active site. D110 provides a ligand contact to Zn(2+). The Proton acceptor role is filled by E141. Zn(2+) contacts are provided by E142, E170, and H355.

The protein belongs to the peptidase M20A family. DapE subfamily. As to quaternary structure, homodimer. It depends on Zn(2+) as a cofactor. Requires Co(2+) as cofactor.

It carries out the reaction N-succinyl-(2S,6S)-2,6-diaminopimelate + H2O = (2S,6S)-2,6-diaminopimelate + succinate. It functions in the pathway amino-acid biosynthesis; L-lysine biosynthesis via DAP pathway; LL-2,6-diaminopimelate from (S)-tetrahydrodipicolinate (succinylase route): step 3/3. In terms of biological role, catalyzes the hydrolysis of N-succinyl-L,L-diaminopimelic acid (SDAP), forming succinate and LL-2,6-diaminopimelate (DAP), an intermediate involved in the bacterial biosynthesis of lysine and meso-diaminopimelic acid, an essential component of bacterial cell walls. The chain is Succinyl-diaminopimelate desuccinylase from Helicobacter pylori (strain HPAG1).